The sequence spans 149 residues: Large-conductance mechanosensitive channel (149 aa).

A run of 2 helical transmembrane segments spans residues 8–28 (FIMRGSVLDLAVGVVIGSAFT) and 74–94 (IGSVISALITFLITAFVLFLI).

The protein belongs to the MscL family. Homopentamer.

It is found in the cell membrane. Its function is as follows. Channel that opens in response to stretch forces in the membrane lipid bilayer. May participate in the regulation of osmotic pressure changes within the cell. In Enterococcus faecalis (strain ATCC 700802 / V583), this protein is Large-conductance mechanosensitive channel.